Here is a 222-residue protein sequence, read N- to C-terminus: Ornithine decarboxylase antizyme 1 (222 aa).

This sequence belongs to the ODC antizyme family. As to quaternary structure, interacts with ODC1 and thereby sterically blocks ODC homodimerization. Forms a ternary complex with PSMB4 and OAZ1 before PSMB4 is incorporated into the 20S proteasome. Interacts with AZIN2; this interaction disrupts the interaction between the antizyme and ODC1. Interacts with FAM171A1.

Functionally, ornithine decarboxylase (ODC) antizyme protein that negatively regulates ODC activity and intracellular polyamine biosynthesis and uptake in response to increased intracellular polyamine levels. Binds to ODC monomers, inhibiting the assembly of the functional ODC homodimer, and targets the monomers for ubiquitin-independent proteolytic destruction by the 26S proteasome. Triggers ODC degradation by inducing the exposure of a cryptic proteasome-interacting surface of ODC. Stabilizes AZIN2 by interfering with its ubiquitination. Also inhibits cellular uptake of polyamines by inactivating the polyamine uptake transporter. SMAD1/OAZ1/PSMB4 complex mediates the degradation of the CREBBP/EP300 repressor SNIP1. Involved in the translocation of AZIN2 from ER-Golgi intermediate compartment (ERGIC) to the cytosol. The chain is Ornithine decarboxylase antizyme 1 (OAZ1) from Mesocricetus auratus (Golden hamster).